The following is a 98-amino-acid chain: Large ribosomal subunit protein uL23 (98 aa).

Belongs to the universal ribosomal protein uL23 family. As to quaternary structure, part of the 50S ribosomal subunit. Contacts protein L29, and trigger factor when it is bound to the ribosome.

In terms of biological role, one of the early assembly proteins it binds 23S rRNA. One of the proteins that surrounds the polypeptide exit tunnel on the outside of the ribosome. Forms the main docking site for trigger factor binding to the ribosome. This chain is Large ribosomal subunit protein uL23, found in Methylobacterium sp. (strain 4-46).